Reading from the N-terminus, the 304-residue chain is N-acetylmuramic acid 6-phosphate etherase (304 aa).

The SIS domain occupies 62 to 225 (IVEAFQQGGR…TTASMILIGK (164 aa)). E90 serves as the catalytic Proton donor. Residue E121 is part of the active site.

This sequence belongs to the GCKR-like family. MurNAc-6-P etherase subfamily. Homodimer.

The catalysed reaction is N-acetyl-D-muramate 6-phosphate + H2O = N-acetyl-D-glucosamine 6-phosphate + (R)-lactate. Its pathway is amino-sugar metabolism; 1,6-anhydro-N-acetylmuramate degradation. The protein operates within amino-sugar metabolism; N-acetylmuramate degradation. It participates in cell wall biogenesis; peptidoglycan recycling. In terms of biological role, specifically catalyzes the cleavage of the D-lactyl ether substituent of MurNAc 6-phosphate, producing GlcNAc 6-phosphate and D-lactate. Together with AnmK, is also required for the utilization of anhydro-N-acetylmuramic acid (anhMurNAc) either imported from the medium or derived from its own cell wall murein, and thus plays a role in cell wall recycling. The protein is N-acetylmuramic acid 6-phosphate etherase of Glaesserella parasuis serovar 5 (strain SH0165) (Haemophilus parasuis).